Reading from the N-terminus, the 510-residue chain is Crotonobetaine/carnitine--CoA ligase (510 aa).

This sequence belongs to the ATP-dependent AMP-binding enzyme family.

The catalysed reaction is 4-(trimethylamino)butanoate + ATP + CoA = 4-(trimethylamino)butanoyl-CoA + AMP + diphosphate. It carries out the reaction crotonobetaine + ATP + CoA = crotonobetainyl-CoA + AMP + diphosphate. The enzyme catalyses (R)-carnitine + ATP + CoA = (R)-carnitinyl-CoA + AMP + diphosphate. The protein operates within amine and polyamine metabolism; carnitine metabolism. Functionally, catalyzes the transfer of CoA to carnitine, generating the initial carnitinyl-CoA needed for the CaiB reaction cycle. Also has activity toward crotonobetaine and gamma-butyrobetaine. In Shigella flexneri serotype 5b (strain 8401), this protein is Crotonobetaine/carnitine--CoA ligase.